A 623-amino-acid polypeptide reads, in one-letter code: Leucine-rich repeat, immunoglobulin-like domain and transmembrane domain-containing protein 1 (623 aa).

Positions 1 to 21 (MRVALGMLWLLALAWPPQARG) are cleaved as a signal peptide. An LRRNT domain is found at 22–59 (FCPSQCSCSLHIMGDGSKARTVVCNDPDMTLPPASIPP). Over 22 to 526 (FCPSQCSCSL…EVVDAENTQQ (505 aa)) the chain is Lumenal. 5 LRR repeats span residues 60–81 (DTSR…AFRP), 84–105 (RLEQ…MLRG), 108–129 (RLRE…ALRD), 132–153 (KLRL…AARF), and 156–177 (NLTF…LIVS). Asn-156 is a glycosylation site (N-linked (GlcNAc...) asparagine). One can recognise an LRRCT domain in the interval 201–253 (NPWACDCRLYDLVHLLDGWAPNLAFIETELRCASPRSLAGVAFSQLELRKCQG). The Ig-like C2-type domain maps to 266 to 335 (LLGGTALLRC…YICQAKNFLG (70 aa)). A disulfide bridge connects residues Cys-275 and Cys-328. N-linked (GlcNAc...) asparagine glycans are attached at residues Asn-296 and Asn-455. One can recognise a Fibronectin type-III domain in the interval 430 to 518 (MVRSVKVVGD…QCVIFSTNEV (89 aa)). Residues 527–547 (LINVVVISVAIVIALPLTLLV) form a helical membrane-spanning segment. The Cytoplasmic portion of the chain corresponds to 548–623 (CCSALQKRCR…GGRRINEYFC (76 aa)). The stretch at 571–594 (YVNLERLGYSEDGLEELSRHSVSE) is one LRR 6 repeat.

May form a homodimer. Interacts with LRIT2; may form a heterodimer with LRIT2. Interacts (via its N-terminal extracellular domain) with metabotropic glutamate receptor GRM6. Interacts (via its extreme C-terminus) with the scaffold protein FRMPD2 (via the third PDZ domain); the interaction leads to their colocalization in photoreceptor synapses.

Its subcellular location is the endoplasmic reticulum membrane. The protein resides in the cell projection. The protein localises to the dendrite. Its function is as follows. Photoreceptor synaptic protein essential for normal vision. Involved in synapse formation in cone photoreceptor cells. In Homo sapiens (Human), this protein is Leucine-rich repeat, immunoglobulin-like domain and transmembrane domain-containing protein 1 (LRIT1).